The following is a 285-amino-acid chain: Polyamine aminopropyltransferase (285 aa).

Residues 5–241 (DTWFTEHFQA…GWWSVTLSSK (237 aa)) enclose the PABS domain. An S-methyl-5'-thioadenosine-binding site is contributed by Gln-35. Positions 66 and 90 each coordinate spermidine. Residues Asp-110 and 141 to 142 (DG) contribute to the S-methyl-5'-thioadenosine site. Asp-160 (proton acceptor) is an active-site residue. 160-163 (DSTD) is a binding site for spermidine. An S-methyl-5'-thioadenosine-binding site is contributed by Pro-167.

It belongs to the spermidine/spermine synthase family. Homodimer or homotetramer.

It localises to the cytoplasm. The catalysed reaction is S-adenosyl 3-(methylsulfanyl)propylamine + putrescine = S-methyl-5'-thioadenosine + spermidine + H(+). Its pathway is amine and polyamine biosynthesis; spermidine biosynthesis; spermidine from putrescine: step 1/1. In terms of biological role, catalyzes the irreversible transfer of a propylamine group from the amino donor S-adenosylmethioninamine (decarboxy-AdoMet) to putrescine (1,4-diaminobutane) to yield spermidine. The protein is Polyamine aminopropyltransferase of Xylella fastidiosa (strain M12).